The following is a 275-amino-acid chain: Spermidine/putrescine transport system permease protein PotB (275 aa).

Residues 1-21 (MIVTIVGWLVLFVFLPNLMII) form a helical membrane-spanning segment. Over 22-60 (GTSFLTRDDASFVKMVFTLDNYTRLLDPLYFEVLLHSLN) the chain is Periplasmic. Residues 55 to 261 (LLHSLNMALI…IVMGLMLLVY (207 aa)) form the ABC transmembrane type-1 domain. The helical transmembrane segment at 61 to 81 (MALIATLACLVLGYPFAWFLA) threads the bilayer. Residues 82-89 (KLPHKVRP) lie on the Cytoplasmic side of the membrane. Residues 90–110 (LLLFLLIVPFWTNSLIRIYGL) form a helical membrane-spanning segment. Residues 111 to 135 (KIFLSTKGYLNEFLLWLGVIDTPIR) are Periplasmic-facing. The chain crosses the membrane as a helical span at residues 136-156 (IMFTPSAVIIGLVYILLPFMV). Over 157–187 (MPLYSSIEKLDKPLLEAARDLGASKLQTFIR) the chain is Cytoplasmic. The chain crosses the membrane as a helical span at residues 188 to 208 (IIIPLTMPGIIAGCLLVMLPA). Topologically, residues 209-241 (MGLFYVSDLMGGAKNLLIGNVIKVQFLNIRDWP) are periplasmic. A helical membrane pass occupies residues 242–262 (FGAATSITLTIVMGLMLLVYW). Residues 263-275 (RASRLLNKKVELE) lie on the Cytoplasmic side of the membrane.

Belongs to the binding-protein-dependent transport system permease family. CysTW subfamily.

Its subcellular location is the cell inner membrane. Required for the activity of the bacterial periplasmic transport system of putrescine and spermidine. The polypeptide is Spermidine/putrescine transport system permease protein PotB (potB) (Escherichia coli (strain K12)).